The sequence spans 248 residues: Transmembrane protein 182 (248 aa).

An N-terminal signal peptide occupies residues 1 to 26 (MKIHVAGFFAGLFGALATLFILLSFG). Over 27–136 (TDYWLLASET…IIYRGFWSVS (110 aa)) the chain is Extracellular. N-linked (GlcNAc...) asparagine glycans are attached at residues Asn-66 and Asn-119. A helical transmembrane segment spans residues 137 to 157 (MLVGVAAVVAGGFIIICAAPF). Topologically, residues 158-167 (ASHRLYKAGG) are cytoplasmic. A helical membrane pass occupies residues 168-188 (GLYLISGFFVLVVTAMYVIWI). The Extracellular portion of the chain corresponds to 189 to 218 (DVLDVISLYTEYQKLNKCADFELNKTYGLS). Asn-212 is a glycosylation site (N-linked (GlcNAc...) asparagine). Residues 219–239 (FMFAPVGVFFCFLSGLLFLVI) form a helical membrane-spanning segment. The Cytoplasmic segment spans residues 240–248 (GRTVHHQYN).

It belongs to the TMEM182 family.

The protein localises to the cell membrane. Its function is as follows. May negatively regulate myogenesis and skeletal muscle regeneration. This is Transmembrane protein 182 (tmem182a) from Danio rerio (Zebrafish).